A 271-amino-acid chain; its full sequence is MPDLHTLPAGSRPERAIRNNGPSDLALERYKLRELAEGWPCYRDACEWENLRSIFHPDAHIYTTWTGLTHHLQFIEASKTGMDNGVFIMHRIHGSTTDIDPSGVRAVTKMKATITQRFSGLPCVSGGTCEADAESDCRFIFFWEKLDGSEYPELDQQWRARFVRHWYEKDKLIAVTAGRDPVIDLEKLQQYPPGYRHLAYLQESTMGVKVLLDLPGHRREGSTVNGQKHDLFQEYPMLHGCNSYKDNRGFPTTLKSIALREIRMKYLFDVI.

A disordered region spans residues 1–20 (MPDLHTLPAGSRPERAIRNN).

Belongs to the PEP2 family.

This is an uncharacterized protein from Aspergillus terreus (strain NIH 2624 / FGSC A1156).